A 216-amino-acid polypeptide reads, in one-letter code: Probable GTP-binding protein EngB (216 aa).

Residues 27–201 form the EngB-type G domain; that stretch reads EGIEVAFAGR…REKLDTWFSE (175 aa). GTP-binding positions include 35-42, 62-66, 80-83, 147-150, and 180-182; these read GRSNAGKS, GRTQL, DLPG, TKAD, and FSS. Positions 42 and 64 each coordinate Mg(2+).

Belongs to the TRAFAC class TrmE-Era-EngA-EngB-Septin-like GTPase superfamily. EngB GTPase family. Mg(2+) is required as a cofactor.

Functionally, necessary for normal cell division and for the maintenance of normal septation. The polypeptide is Probable GTP-binding protein EngB (Yersinia pestis bv. Antiqua (strain Angola)).